Here is a 195-residue protein sequence, read N- to C-terminus: Thymidine kinase (195 aa).

ATP contacts are provided by residues 9 to 16 (STMNAGKS) and 87 to 90 (DEAQ). The Proton acceptor role is filled by glutamate 88. Zn(2+) is bound by residues cysteine 145, cysteine 147, cysteine 182, and histidine 185.

Belongs to the thymidine kinase family. Homotetramer.

It is found in the cytoplasm. It carries out the reaction thymidine + ATP = dTMP + ADP + H(+). The polypeptide is Thymidine kinase (Jannaschia sp. (strain CCS1)).